The sequence spans 317 residues: Beta-ketoacyl-[acyl-carrier-protein] synthase III (317 aa).

Catalysis depends on residues C112 and H244. Residues Q245–R249 are ACP-binding. The active site involves N274.

This sequence belongs to the thiolase-like superfamily. FabH family. Homodimer.

It is found in the cytoplasm. It carries out the reaction malonyl-[ACP] + acetyl-CoA + H(+) = 3-oxobutanoyl-[ACP] + CO2 + CoA. The protein operates within lipid metabolism; fatty acid biosynthesis. In terms of biological role, catalyzes the condensation reaction of fatty acid synthesis by the addition to an acyl acceptor of two carbons from malonyl-ACP. Catalyzes the first condensation reaction which initiates fatty acid synthesis and may therefore play a role in governing the total rate of fatty acid production. Possesses both acetoacetyl-ACP synthase and acetyl transacylase activities. Its substrate specificity determines the biosynthesis of branched-chain and/or straight-chain of fatty acids. In Rickettsia prowazekii (strain Madrid E), this protein is Beta-ketoacyl-[acyl-carrier-protein] synthase III.